Reading from the N-terminus, the 221-residue chain is 2-phospho-L-lactate guanylyltransferase (221 aa).

This sequence belongs to the CofC family. Homodimer.

It carries out the reaction (2S)-2-phospholactate + GTP + H(+) = (2S)-lactyl-2-diphospho-5'-guanosine + diphosphate. It functions in the pathway cofactor biosynthesis; coenzyme F420 biosynthesis. Its function is as follows. Guanylyltransferase that catalyzes the activation of (2S)-2-phospholactate (2-PL) as (2S)-lactyl-2-diphospho-5'-guanosine, via the condensation of 2-PL with GTP. It is involved in the biosynthesis of coenzyme F420, a hydride carrier cofactor. The chain is 2-phospho-L-lactate guanylyltransferase from Methanothrix thermoacetophila (strain DSM 6194 / JCM 14653 / NBRC 101360 / PT) (Methanosaeta thermophila).